Consider the following 356-residue polypeptide: Probable cysteine protease RDL6 (356 aa).

Residues 1–26 (MGFVRPVCMTILFLLIVFVLSAPSSA) form the signal peptide. Positions 27-132 (MDLPATSGGH…RRYVPLAGDQ (106 aa)) are cleaved as a propeptide — activation peptide. Asparagine 37 and asparagine 86 each carry an N-linked (GlcNAc...) asparagine glycan. Cystine bridges form between cysteine 154-cysteine 195, cysteine 188-cysteine 229, and cysteine 288-cysteine 339. Cysteine 157 is an active-site residue. Catalysis depends on residues histidine 294 and asparagine 314.

This sequence belongs to the peptidase C1 family.

Functionally, probable thiol protease. The protein is Probable cysteine protease RDL6 of Arabidopsis thaliana (Mouse-ear cress).